The following is a 591-amino-acid chain: Phenylalanine--tRNA ligase beta subunit (591 aa).

The region spanning 304 to 380 (LSYREMTVTT…VAFGYNNLIT (77 aa)) is the B5 domain. Mg(2+) contacts are provided by aspartate 358, aspartate 364, glutamate 367, and aspartate 368.

Belongs to the phenylalanyl-tRNA synthetase beta subunit family. Type 2 subfamily. Tetramer of two alpha and two beta subunits. Mg(2+) is required as a cofactor.

The protein resides in the cytoplasm. It catalyses the reaction tRNA(Phe) + L-phenylalanine + ATP = L-phenylalanyl-tRNA(Phe) + AMP + diphosphate + H(+). The protein is Phenylalanine--tRNA ligase beta subunit of Caenorhabditis elegans.